Consider the following 63-residue polypeptide: Large ribosomal subunit protein uL29 (63 aa).

It belongs to the universal ribosomal protein uL29 family.

In Shewanella pealeana (strain ATCC 700345 / ANG-SQ1), this protein is Large ribosomal subunit protein uL29.